We begin with the raw amino-acid sequence, 407 residues long: Probable acyl-CoA dehydrogenase FadE2 (407 aa).

The protein belongs to the acyl-CoA dehydrogenase family. FAD serves as cofactor.

It carries out the reaction a 2,3-saturated acyl-CoA + A = a 2,3-dehydroacyl-CoA + AH2. The sequence is that of Probable acyl-CoA dehydrogenase FadE2 from Mycobacterium tuberculosis (strain ATCC 25618 / H37Rv).